Consider the following 312-residue polypeptide: Ribosomal RNA small subunit methyltransferase H (312 aa).

S-adenosyl-L-methionine is bound by residues Gly-37–His-39, Asp-57, Phe-83, and Asp-104.

This sequence belongs to the methyltransferase superfamily. RsmH family.

The protein localises to the cytoplasm. The enzyme catalyses cytidine(1402) in 16S rRNA + S-adenosyl-L-methionine = N(4)-methylcytidine(1402) in 16S rRNA + S-adenosyl-L-homocysteine + H(+). In terms of biological role, specifically methylates the N4 position of cytidine in position 1402 (C1402) of 16S rRNA. In Malacoplasma penetrans (strain HF-2) (Mycoplasma penetrans), this protein is Ribosomal RNA small subunit methyltransferase H.